The sequence spans 424 residues: Glutathione reductase (424 aa).

Lys-8 is a binding site for FAD. Tyr-56 contacts glutathione. FAD is bound at residue Ala-72. The NADP(+) site is built by Ala-137, Ile-140, Glu-143, Arg-160, Arg-166, and Gly-236. Asp-277 is a binding site for FAD. Leu-283 provides a ligand contact to NADP(+). Thr-285 is an FAD binding site. Arg-293 contributes to the glutathione binding site. Val-316 contacts NADP(+). His-413 is an FAD binding site. Catalysis depends on His-413, which acts as the Proton acceptor.

The protein belongs to the class-I pyridine nucleotide-disulfide oxidoreductase family. In terms of assembly, homodimer; disulfide-linked. FAD is required as a cofactor.

Its subcellular location is the mitochondrion. The protein resides in the cytoplasm. The enzyme catalyses 2 glutathione + NADP(+) = glutathione disulfide + NADPH + H(+). Catalyzes the reduction of glutathione disulfide (GSSG) to reduced glutathione (GSH). Constitutes the major mechanism to maintain a high GSH:GSSG ratio in the cytosol. The sequence is that of Glutathione reductase (Gsr) from Rattus norvegicus (Rat).